The sequence spans 213 residues: ATP synthase peripheral stalk subunit OSCP, mitochondrial (213 aa).

Residues 1–23 constitute a mitochondrion transit peptide; sequence MAAPAASGLSRQVRSFSTSVVRP. The SIFI-degron motif lies at 5–23; it reads AASGLSRQVRSFSTSVVRP. Residues K54, K60, K70, and K73 each carry the N6-acetyllysine modification. At K90 the chain carries N6-succinyllysine. An N6-acetyllysine; alternate mark is found at K100, K158, and K162. K100, K158, and K162 each carry N6-succinyllysine; alternate. An N6-acetyllysine mark is found at K172, K176, and K192. K199 bears the N6-succinyllysine mark.

It belongs to the ATPase delta chain family. In terms of assembly, component of the ATP synthase complex composed at least of ATP5F1A/subunit alpha, ATP5F1B/subunit beta, ATP5MC1/subunit c (homooctomer), MT-ATP6/subunit a, MT-ATP8/subunit 8, ATP5ME/subunit e, ATP5MF/subunit f, ATP5MG/subunit g, ATP5MK/subunit k, ATP5MJ/subunit j, ATP5F1C/subunit gamma, ATP5F1D/subunit delta, ATP5F1E/subunit epsilon, ATP5PF/subunit F6, ATP5PB/subunit b, ATP5PD/subunit d, ATP5PO/subunit OSCP. ATP synthase complex consists of a soluble F(1) head domain (subunits alpha(3) and beta(3)) - the catalytic core - and a membrane F(0) domain - the membrane proton channel (subunits c, a, 8, e, f, g, k and j). These two domains are linked by a central stalk (subunits gamma, delta, and epsilon) rotating inside the F1 region and a stationary peripheral stalk (subunits F6, b, d, and OSCP). Acetylation of Lys-70 and Lys-158 is observed in liver mitochondria from fasted mice but not from fed mice. In terms of processing, acetylation at Lys-162 decreases ATP production. Deacetylated by SIRT3. Post-translationally, in response to mitochondrial stress, the precursor protein is ubiquitinated by the SIFI complex in the cytoplasm before mitochondrial import, leading to its degradation. Within the SIFI complex, UBR4 initiates ubiquitin chain that are further elongated or branched by KCMF1.

It is found in the mitochondrion. The protein localises to the mitochondrion inner membrane. Its function is as follows. Subunit OSCP, of the mitochondrial membrane ATP synthase complex (F(1)F(0) ATP synthase or Complex V) that produces ATP from ADP in the presence of a proton gradient across the membrane which is generated by electron transport complexes of the respiratory chain. ATP synthase complex consist of a soluble F(1) head domain - the catalytic core - and a membrane F(1) domain - the membrane proton channel. These two domains are linked by a central stalk rotating inside the F(1) region and a stationary peripheral stalk. During catalysis, ATP synthesis in the catalytic domain of F(1) is coupled via a rotary mechanism of the central stalk subunits to proton translocation. In vivo, can only synthesize ATP although its ATP hydrolase activity can be activated artificially in vitro. Part of the complex F(0) domain. Part of the complex F(0) domain and the peripheric stalk, which acts as a stator to hold the catalytic alpha(3)beta(3) subcomplex and subunit a/ATP6 static relative to the rotary elements. The polypeptide is ATP synthase peripheral stalk subunit OSCP, mitochondrial (Mus musculus (Mouse)).